The primary structure comprises 488 residues: Diacylglycerol kinase 3 (488 aa).

A disordered region spans residues 1–24 (MDSPVSKTDASKEKFVASRPSTAD). Positions 87-245 (APHAPMVVFI…SWKILVSMPS (159 aa)) constitute a DAGKc domain.

Belongs to the eukaryotic diacylglycerol kinase family. Monomer.

It carries out the reaction a 1,2-diacyl-sn-glycerol + ATP = a 1,2-diacyl-sn-glycero-3-phosphate + ADP + H(+). Phosphorylates the second messenger diacylglycerol (DAG) to generate phosphatidic acid (PA), another important signaling molecule. PA is required for plant development and responses to abiotic stress and pathogen attack. May be involved in the accumulation of PA during cold stress. The polypeptide is Diacylglycerol kinase 3 (DGK3) (Arabidopsis thaliana (Mouse-ear cress)).